We begin with the raw amino-acid sequence, 258 residues long: 5'-nucleotidase SurE (258 aa).

The a divalent metal cation site is built by Asp-8, Asp-9, Ser-40, and Asn-93.

This sequence belongs to the SurE nucleotidase family. It depends on a divalent metal cation as a cofactor.

It is found in the cytoplasm. It carries out the reaction a ribonucleoside 5'-phosphate + H2O = a ribonucleoside + phosphate. Nucleotidase that shows phosphatase activity on nucleoside 5'-monophosphates. The protein is 5'-nucleotidase SurE of Afipia carboxidovorans (strain ATCC 49405 / DSM 1227 / KCTC 32145 / OM5) (Oligotropha carboxidovorans).